The following is a 195-amino-acid chain: COMM domain-containing protein 3 (195 aa).

The region spanning 124–193 (HITDVSWRLE…DASKSLERAT (70 aa)) is the COMM domain.

The protein belongs to the COMM domain-containing protein 3 family. Component of the commander complex consisting of the CCC subcomplex and the retriever subcomplex. Component of the CCC (COMMD/CCDC22/CCDC93) subcomplex consisting of COMMD1, COMMD2, COMMD3, COMMD4, COMMD5, COMMD6, COMMD7, COMMD8, COMMD9, COMMD10, CCDC22 and CCDC93; within the complex forms a heterodimer with COMMD2. Interacts with NFKB1/p105. Interacts with CCDC22, CCDC93, SCNN1B, CUL3, CUL4A, CUL4B, CUL5.

Its subcellular location is the cytoplasm. It localises to the nucleus. In terms of biological role, scaffold protein in the commander complex that is essential for endosomal recycling of transmembrane cargos; the commander complex is composed of the CCC subcomplex and the retriever subcomplex. May modulate activity of cullin-RING E3 ubiquitin ligase (CRL) complexes. May down-regulate activation of NF-kappa-B. Modulates Na(+) transport in epithelial cells by regulation of apical cell surface expression of amiloride-sensitive sodium channel (ENaC) subunits. This is COMM domain-containing protein 3 (COMMD3) from Bos taurus (Bovine).